The chain runs to 232 residues: Ribose-5-phosphate isomerase A (232 aa).

Residues 28–31 (TGST), 83–86 (DGAD), and 96–99 (KGGG) contribute to the substrate site. Glu105 functions as the Proton acceptor in the catalytic mechanism. Lys123 is a substrate binding site.

Belongs to the ribose 5-phosphate isomerase family. In terms of assembly, homodimer.

It catalyses the reaction aldehydo-D-ribose 5-phosphate = D-ribulose 5-phosphate. It functions in the pathway carbohydrate degradation; pentose phosphate pathway; D-ribose 5-phosphate from D-ribulose 5-phosphate (non-oxidative stage): step 1/1. Catalyzes the reversible conversion of ribose-5-phosphate to ribulose 5-phosphate. The protein is Ribose-5-phosphate isomerase A of Rhodopseudomonas palustris (strain BisB5).